A 387-amino-acid chain; its full sequence is Succinate--CoA ligase [ADP-forming] subunit beta (387 aa).

The region spanning 9 to 244 (KQLFASYGLP…VSQEDDRENR (236 aa)) is the ATP-grasp domain. ATP is bound by residues Lys46, 53–55 (GRG), Glu99, Cys102, and Glu107. Asn199 and Asp213 together coordinate Mg(2+). Substrate contacts are provided by residues Asn264 and 321–323 (GIV).

It belongs to the succinate/malate CoA ligase beta subunit family. In terms of assembly, heterotetramer of two alpha and two beta subunits. Mg(2+) is required as a cofactor.

The catalysed reaction is succinate + ATP + CoA = succinyl-CoA + ADP + phosphate. It catalyses the reaction GTP + succinate + CoA = succinyl-CoA + GDP + phosphate. It participates in carbohydrate metabolism; tricarboxylic acid cycle; succinate from succinyl-CoA (ligase route): step 1/1. Succinyl-CoA synthetase functions in the citric acid cycle (TCA), coupling the hydrolysis of succinyl-CoA to the synthesis of either ATP or GTP and thus represents the only step of substrate-level phosphorylation in the TCA. The beta subunit provides nucleotide specificity of the enzyme and binds the substrate succinate, while the binding sites for coenzyme A and phosphate are found in the alpha subunit. This is Succinate--CoA ligase [ADP-forming] subunit beta from Legionella pneumophila (strain Corby).